Here is a 309-residue protein sequence, read N- to C-terminus: tRNA pseudouridine synthase B (309 aa).

D39 acts as the Nucleophile in catalysis.

Belongs to the pseudouridine synthase TruB family. Type 1 subfamily.

The catalysed reaction is uridine(55) in tRNA = pseudouridine(55) in tRNA. In terms of biological role, responsible for synthesis of pseudouridine from uracil-55 in the psi GC loop of transfer RNAs. The protein is tRNA pseudouridine synthase B of Bacillus licheniformis (strain ATCC 14580 / DSM 13 / JCM 2505 / CCUG 7422 / NBRC 12200 / NCIMB 9375 / NCTC 10341 / NRRL NRS-1264 / Gibson 46).